The chain runs to 526 residues: Putative NipSnap protein K02D10.1 (526 aa).

It belongs to the NipSnap family.

This is Putative NipSnap protein K02D10.1 from Caenorhabditis elegans.